Reading from the N-terminus, the 486-residue chain is Cysteine--tRNA ligase (486 aa).

Cys-30 serves as a coordination point for Zn(2+). Positions 32–42 (PTVYDRAHLGN) match the 'HIGH' region motif. The Zn(2+) site is built by Cys-221, His-246, and Glu-250. Positions 279 to 283 (KMSKS) match the 'KMSKS' region motif. An ATP-binding site is contributed by Lys-282.

Belongs to the class-I aminoacyl-tRNA synthetase family. As to quaternary structure, monomer. Requires Zn(2+) as cofactor.

The protein resides in the cytoplasm. The enzyme catalyses tRNA(Cys) + L-cysteine + ATP = L-cysteinyl-tRNA(Cys) + AMP + diphosphate. This is Cysteine--tRNA ligase from Cereibacter sphaeroides (strain ATCC 17025 / ATH 2.4.3) (Rhodobacter sphaeroides).